The sequence spans 427 residues: Ribosomal protein uS12 methylthiotransferase RimO (427 aa).

The 116-residue stretch at 1–116 (MNFYVDVLGC…IAENIGKESI (116 aa)) folds into the MTTase N-terminal domain. Cys10, Cys46, Cys79, Cys145, Cys149, and Cys152 together coordinate [4Fe-4S] cluster. In terms of domain architecture, Radical SAM core spans 131-360 (VDEKQYAYVK…MEEQSKISFE (230 aa)). The 64-residue stretch at 363 to 426 (EKMVGKTFKV…VYDLEGKIVE (64 aa)) folds into the TRAM domain.

This sequence belongs to the methylthiotransferase family. RimO subfamily. [4Fe-4S] cluster serves as cofactor.

It is found in the cytoplasm. The enzyme catalyses L-aspartate(89)-[ribosomal protein uS12]-hydrogen + (sulfur carrier)-SH + AH2 + 2 S-adenosyl-L-methionine = 3-methylsulfanyl-L-aspartate(89)-[ribosomal protein uS12]-hydrogen + (sulfur carrier)-H + 5'-deoxyadenosine + L-methionine + A + S-adenosyl-L-homocysteine + 2 H(+). Functionally, catalyzes the methylthiolation of an aspartic acid residue of ribosomal protein uS12. The protein is Ribosomal protein uS12 methylthiotransferase RimO of Thermosipho africanus (strain TCF52B).